Consider the following 149-residue polypeptide: Transcriptional repressor NrdR (149 aa).

A zinc finger lies at 3 to 34 (CPFCSATDTKVIDSRLVAEGHQVRRRRECTEC). One can recognise an ATP-cone domain in the interval 49–139 (PRVIKRDGSR…VYRAFEDVSE (91 aa)).

It belongs to the NrdR family. Requires Zn(2+) as cofactor.

In terms of biological role, negatively regulates transcription of bacterial ribonucleotide reductase nrd genes and operons by binding to NrdR-boxes. The sequence is that of Transcriptional repressor NrdR from Shewanella putrefaciens (strain CN-32 / ATCC BAA-453).